Here is an 84-residue protein sequence, read N- to C-terminus: Exodeoxyribonuclease 7 small subunit (84 aa).

This sequence belongs to the XseB family. As to quaternary structure, heterooligomer composed of large and small subunits.

It is found in the cytoplasm. It catalyses the reaction Exonucleolytic cleavage in either 5'- to 3'- or 3'- to 5'-direction to yield nucleoside 5'-phosphates.. Bidirectionally degrades single-stranded DNA into large acid-insoluble oligonucleotides, which are then degraded further into small acid-soluble oligonucleotides. The protein is Exodeoxyribonuclease 7 small subunit of Haemophilus influenzae (strain ATCC 51907 / DSM 11121 / KW20 / Rd).